The primary structure comprises 338 residues: Protein RecA (338 aa).

66–73 (GPESSGKT) contacts ATP.

Belongs to the RecA family.

It localises to the cytoplasm. In terms of biological role, can catalyze the hydrolysis of ATP in the presence of single-stranded DNA, the ATP-dependent uptake of single-stranded DNA by duplex DNA, and the ATP-dependent hybridization of homologous single-stranded DNAs. It interacts with LexA causing its activation and leading to its autocatalytic cleavage. The sequence is that of Protein RecA from Geobacter sulfurreducens (strain ATCC 51573 / DSM 12127 / PCA).